We begin with the raw amino-acid sequence, 386 residues long: Heat-inducible transcription repressor HrcA (386 aa).

It belongs to the HrcA family.

Its function is as follows. Negative regulator of class I heat shock genes (grpE-dnaK-dnaJ and groELS operons). Prevents heat-shock induction of these operons. The protein is Heat-inducible transcription repressor HrcA of Chlamydia caviae (strain ATCC VR-813 / DSM 19441 / 03DC25 / GPIC) (Chlamydophila caviae).